The sequence spans 80 residues: 17 kDa surface antigen (80 aa).

Residues alanine 47 to glutamate 58 are compositionally biased toward polar residues. The disordered stretch occupies residues alanine 47–threonine 80.

This sequence belongs to the rickettsiale 17 kDa surface antigen family.

The protein localises to the cell outer membrane. The chain is 17 kDa surface antigen (omp) from Rickettsia canadensis.